Consider the following 297-residue polypeptide: N-acetylmuramic acid 6-phosphate etherase (297 aa).

The SIS domain maps to 55–218; the sequence is AAAALKAGGR…STGAMVKLGK (164 aa). Residue Glu-83 is the Proton donor of the active site. Glu-114 is a catalytic residue.

This sequence belongs to the GCKR-like family. MurNAc-6-P etherase subfamily. As to quaternary structure, homodimer.

The enzyme catalyses N-acetyl-D-muramate 6-phosphate + H2O = N-acetyl-D-glucosamine 6-phosphate + (R)-lactate. It participates in amino-sugar metabolism; 1,6-anhydro-N-acetylmuramate degradation. The protein operates within amino-sugar metabolism; N-acetylmuramate degradation. It functions in the pathway cell wall biogenesis; peptidoglycan recycling. In terms of biological role, specifically catalyzes the cleavage of the D-lactyl ether substituent of MurNAc 6-phosphate, producing GlcNAc 6-phosphate and D-lactate. Together with AnmK, is also required for the utilization of anhydro-N-acetylmuramic acid (anhMurNAc) either imported from the medium or derived from its own cell wall murein, and thus plays a role in cell wall recycling. This Serratia proteamaculans (strain 568) protein is N-acetylmuramic acid 6-phosphate etherase.